We begin with the raw amino-acid sequence, 148 residues long: UPF0260 protein YcgN (148 aa).

The protein belongs to the UPF0260 family.

The sequence is that of UPF0260 protein YcgN from Salmonella paratyphi A (strain AKU_12601).